The chain runs to 326 residues: MKENFWSTLPRPFFILAPMEDVTNIVFRHVVSEAARPDVFFTEFTNTESYCHPEGIHSVRGRLTFSDDEQPMVAHIWGDKPEQFREMSIGLADMGFKGIDLNMGCPVANVAKKGKGSGLILRPETAAEIIQASKAGGLPVSVKTRLGYYDIDEWRDWLKHVFEQDIANLSIHLRTRKEMSKVDAHWELIEAIKTLRDEIAPNTLLTINGDIPDRQTGLELANKYGIDGIMIGRGIFHNPFAFEKEPREHSSKELLGLLRLHLSLFEKYDKDEARHFKSLRRFFKIYVRGIRGASELRHQLMNTQSIAEARELLDTFEARMDARSEV.

An FMN-binding site is contributed by 18–20; the sequence is PME. Cys105 functions as the Proton donor in the catalytic mechanism. Residues Lys143, 208 to 210, and 232 to 233 contribute to the FMN site; these read NGD and GR.

It belongs to the Dus family. FMN is required as a cofactor.

It catalyses the reaction a 5,6-dihydrouridine in tRNA + NAD(+) = a uridine in tRNA + NADH + H(+). It carries out the reaction a 5,6-dihydrouridine in tRNA + NADP(+) = a uridine in tRNA + NADPH + H(+). Functionally, catalyzes the synthesis of 5,6-dihydrouridine (D), a modified base found in the D-loop of most tRNAs, via the reduction of the C5-C6 double bond in target uridines. This Staphylococcus epidermidis (strain ATCC 12228 / FDA PCI 1200) protein is Probable tRNA-dihydrouridine synthase (dus).